A 300-amino-acid chain; its full sequence is ETS homologous factor (300 aa).

One can recognise a PNT domain in the interval 29-115 (STCNVSSGFF…SNLQHLKWNG (87 aa)). The interval 183-202 (ESPDMKKEQDPPAKCHTKKH) is disordered. Residues 185–195 (PDMKKEQDPPA) show a composition bias toward basic and acidic residues. Positions 207–289 (THLWEFIRDI…DGRRLVYKFG (83 aa)) form a DNA-binding region, ETS.

Belongs to the ETS family.

It localises to the nucleus. Its function is as follows. Transcriptional activator that may play a role in regulating epithelial cell differentiation and proliferation. May act as a repressor for a specific subset of ETS/AP-1-responsive genes, and as a modulator of the nuclear response to mitogen-activated protein kinase signaling cascades. Binds to DNA sequences containing the consensus nucleotide core sequence GGAA. Involved in regulation of TNFRSF10B/DR5 expression through Ets-binding sequences on the TNFRSF10B/DR5 promoter. The polypeptide is ETS homologous factor (EHF) (Pan paniscus (Pygmy chimpanzee)).